Consider the following 1211-residue polypeptide: RNA helicase Mov10l1 (1211 aa).

Disordered stretches follow at residues 340-385 and 674-710; these read KENS…GENG and WNHA…RVGD. Polar residues-rich tracts occupy residues 345 to 372 and 674 to 688; these read DENI…NNRG and WNHA…QSTS. A compositionally biased stretch (basic and acidic residues) spans 694-710; that stretch reads TMTDQAEHGTEERRVGD. 770 to 777 serves as a coordination point for ATP; that stretch reads GPPGTGKT. Residues 886–889 carry the DEAG box motif; sequence DEAG. The disordered stretch occupies residues 1192 to 1211; sequence DPSYPVVPESTGPEKHQEPS.

This sequence belongs to the DNA2/NAM7 helicase family. SDE3 subfamily. Interacts with PIWIL1. Interacts with PIWIL2. Interacts with PIWIL4. Interacts with HSPA2. Interacts with PLD6. As to expression, specifically expressed in testis.

The protein resides in the cytoplasm. The catalysed reaction is ATP + H2O = ADP + phosphate + H(+). Its function is as follows. ATP-dependent RNA helicase required during spermatogenesis to repress transposable elements and prevent their mobilization, which is essential for germline integrity. Acts via the piRNA metabolic process, which mediates the repression of transposable elements during meiosis by forming complexes composed of piRNAs and Piwi proteins and governs the methylation and subsequent repression of transposons. Involved in the primary piRNA metabolic process. Specifically binds to piRNA precursors and promotes the generation of intermediate piRNA processing fragments that are subsequently loaded to Piwi proteins. Acts via its ATP-dependent RNA helicase activity: displays 5'-3' RNA unwinding activity and probably mediates unwinding and funneling of single-stranded piRNA precursor transcripts to the endonuclease that catalyzes the first cleavage step of piRNA processing to generate piRNA intermediate fragments that are subsequently loaded to Piwi proteins. This chain is RNA helicase Mov10l1, found in Homo sapiens (Human).